The following is a 355-amino-acid chain: Peptide chain release factor 1 (355 aa).

At Gln-233 the chain carries N5-methylglutamine.

It belongs to the prokaryotic/mitochondrial release factor family. Post-translationally, methylated by PrmC. Methylation increases the termination efficiency of RF1.

It localises to the cytoplasm. Its function is as follows. Peptide chain release factor 1 directs the termination of translation in response to the peptide chain termination codons UAG and UAA. This chain is Peptide chain release factor 1, found in Desulfitobacterium hafniense (strain DSM 10664 / DCB-2).